Consider the following 692-residue polypeptide: Methionine--tRNA ligase (692 aa).

The 'HIGH' region motif lies at 15 to 25 (PYANGPIHLGH). The Zn(2+) site is built by C146, C149, C159, and C162. The 'KMSKS' region signature appears at 332–336 (KMSKS). K335 contacts ATP. A disordered region spans residues 552–577 (TTEAAPEKKAKKSAETADVAVDTRSP). A compositionally biased stretch (basic and acidic residues) spans 556–566 (APEKKAKKSAE). The 102-residue stretch at 591–692 (DFAKLDLRIA…EGAQPGMRVK (102 aa)) folds into the tRNA-binding domain.

The protein belongs to the class-I aminoacyl-tRNA synthetase family. MetG type 1 subfamily. As to quaternary structure, homodimer. It depends on Zn(2+) as a cofactor.

The protein localises to the cytoplasm. It catalyses the reaction tRNA(Met) + L-methionine + ATP = L-methionyl-tRNA(Met) + AMP + diphosphate. Is required not only for elongation of protein synthesis but also for the initiation of all mRNA translation through initiator tRNA(fMet) aminoacylation. This Shewanella sediminis (strain HAW-EB3) protein is Methionine--tRNA ligase.